The sequence spans 360 residues: MSKLISKQGKRPALSQSGLAKPSTSKKSSASKNANTETAKLLTKALHPRNVHKYGYDFAALSKTLPALTPFVGPNAYGNISIDFANPDAVKQLNAALLLHHYSIRDWDIPHGYLCPPIPGRVDYLHYLADLLSAPHKGKANRNIRALDIGTGANGIYPLLGIESYSWQFVASDIDKVSLDNVDEILAKNPQLAAKLSLRLQLNPKAIFNGVIEKDEYFDVSLCNPPFHRSLADANAGTQRKLSNLAKNRGQSQQQAVQAKVALNFGGQKAELWCEGGEAAFLANMISESKGFAAQCLWFTSLVSKSENLKPCYAQLAKQGTSEVKTIEMHQGNKITRILAWSYLSLSQRQAWAKLRDQSR.

The disordered stretch occupies residues methionine 1–threonine 36. Residues serine 23–threonine 36 are compositionally biased toward low complexity.

It belongs to the methyltransferase superfamily. METTL16/RlmF family.

The protein localises to the cytoplasm. The enzyme catalyses adenosine(1618) in 23S rRNA + S-adenosyl-L-methionine = N(6)-methyladenosine(1618) in 23S rRNA + S-adenosyl-L-homocysteine + H(+). Functionally, specifically methylates the adenine in position 1618 of 23S rRNA. The sequence is that of Ribosomal RNA large subunit methyltransferase F from Shewanella denitrificans (strain OS217 / ATCC BAA-1090 / DSM 15013).